A 629-amino-acid polypeptide reads, in one-letter code: tRNA uridine 5-carboxymethylaminomethyl modification enzyme MnmG (629 aa).

Gly-13 to Gly-18 serves as a coordination point for FAD. Gly-273 to Phe-287 is an NAD(+) binding site.

This sequence belongs to the MnmG family. As to quaternary structure, homodimer. Heterotetramer of two MnmE and two MnmG subunits. FAD is required as a cofactor.

The protein resides in the cytoplasm. Functionally, NAD-binding protein involved in the addition of a carboxymethylaminomethyl (cmnm) group at the wobble position (U34) of certain tRNAs, forming tRNA-cmnm(5)s(2)U34. The protein is tRNA uridine 5-carboxymethylaminomethyl modification enzyme MnmG of Shewanella piezotolerans (strain WP3 / JCM 13877).